Consider the following 94-residue polypeptide: Putative pterin-4-alpha-carbinolamine dehydratase (94 aa).

It belongs to the pterin-4-alpha-carbinolamine dehydratase family.

The enzyme catalyses (4aS,6R)-4a-hydroxy-L-erythro-5,6,7,8-tetrahydrobiopterin = (6R)-L-erythro-6,7-dihydrobiopterin + H2O. The protein is Putative pterin-4-alpha-carbinolamine dehydratase of Chloroflexus aggregans (strain MD-66 / DSM 9485).